Here is a 281-residue protein sequence, read N- to C-terminus: NAD kinase (281 aa).

D61 serves as the catalytic Proton acceptor. NAD(+) is bound by residues 61–62 (DG), 134–135 (ND), R145, D164, 175–180 (TAYSLS), and Q234.

Belongs to the NAD kinase family. It depends on a divalent metal cation as a cofactor.

Its subcellular location is the cytoplasm. The catalysed reaction is NAD(+) + ATP = ADP + NADP(+) + H(+). Its function is as follows. Involved in the regulation of the intracellular balance of NAD and NADP, and is a key enzyme in the biosynthesis of NADP. Catalyzes specifically the phosphorylation on 2'-hydroxyl of the adenosine moiety of NAD to yield NADP. The chain is NAD kinase from Clostridium botulinum (strain 657 / Type Ba4).